A 652-amino-acid chain; its full sequence is Acetyl-coenzyme A synthetase (652 aa).

CoA is bound by residues 191 to 194 (RAGR), T311, and N335. ATP contacts are provided by residues 387 to 389 (GEP), 411 to 416 (DTWWQT), D500, and R515. S523 contributes to the CoA binding site. R526 is a binding site for ATP. Mg(2+) is bound by residues V537, H539, and I542. R584 contacts CoA. K609 carries the post-translational modification N6-acetyllysine; by Pat.

The protein belongs to the ATP-dependent AMP-binding enzyme family. Monomer. It depends on Mg(2+) as a cofactor. Acetylated. Deacetylation by the SIR2-homolog deacetylase activates the enzyme.

The catalysed reaction is acetate + ATP + CoA = acetyl-CoA + AMP + diphosphate. Its function is as follows. Catalyzes the conversion of acetate into acetyl-CoA (AcCoA), an essential intermediate at the junction of anabolic and catabolic pathways. Acs undergoes a two-step reaction. In the first half reaction, Acs combines acetate with ATP to form acetyl-adenylate (AcAMP) intermediate. In the second half reaction, it can then transfer the acetyl group from AcAMP to the sulfhydryl group of CoA, forming the product AcCoA. Required for acetate recapture but not for acetate excretion when this organism is grown on ethanolamine. Enables the cell to use acetate during aerobic growth to generate energy via the TCA cycle, and biosynthetic compounds via the glyoxylate shunt. Acetylates CheY, the response regulator involved in flagellar movement and chemotaxis. This Salmonella typhimurium (strain LT2 / SGSC1412 / ATCC 700720) protein is Acetyl-coenzyme A synthetase.